Reading from the N-terminus, the 455-residue chain is UPF0053 protein MT1890 (455 aa).

In terms of domain architecture, CNNM transmembrane spans 2–205; sequence NLTDTVATIL…ARSGALDDAT (204 aa). 4 helical membrane-spanning segments follow: residues 6–26, 68–88, 106–126, and 148–168; these read TVAT…FVAA, LGIS…VAEL, LITF…GELV, and LFSL…NWIV. 2 CBS domains span residues 224 to 285 and 286 to 346; these read MTPR…AHTL and LTTV…VRDE.

This sequence belongs to the UPF0053 family.

The protein resides in the cell membrane. This is UPF0053 protein MT1890 from Mycobacterium tuberculosis (strain CDC 1551 / Oshkosh).